Reading from the N-terminus, the 143-residue chain is Putative glycerol transporter Lin0368 (143 aa).

4 consecutive transmembrane segments (helical) span residues 6 to 26 (GMIG…PLAE), 27 to 47 (NYGI…MWFM), 60 to 80 (AAFV…DVFM), and 90 to 110 (LPTI…AAAI). A disordered region spans residues 118 to 143 (HEAKQEKTEPGMNIKEEERLNENQLV).

The protein resides in the membrane. Functionally, could be involved in the glycerol uptake either via facilitated diffusion or active transport. In Listeria innocua serovar 6a (strain ATCC BAA-680 / CLIP 11262), this protein is Putative glycerol transporter Lin0368.